We begin with the raw amino-acid sequence, 424 residues long: 3-oxo-tetronate kinase (424 aa).

ATP is bound by residues serine 260, 364 to 367, and glycine 407; that span reads GGET.

Belongs to the four-carbon acid sugar kinase family.

The catalysed reaction is 3-dehydro-L-erythronate + ATP = 3-dehydro-4-O-phospho-L-erythronate + ADP + H(+). It catalyses the reaction 3-dehydro-D-erythronate + ATP = 3-dehydro-4-O-phospho-D-erythronate + ADP + H(+). In terms of biological role, catalyzes the ATP-dependent phosphorylation of 3-oxo-tetronate to 3-oxo-tetronate 4-phosphate. The protein is 3-oxo-tetronate kinase of Pectobacterium atrosepticum (strain SCRI 1043 / ATCC BAA-672) (Erwinia carotovora subsp. atroseptica).